Consider the following 561-residue polypeptide: DNA ligase B (561 aa).

Lysine 128 (N6-AMP-lysine intermediate) is an active-site residue.

The protein belongs to the NAD-dependent DNA ligase family. LigB subfamily.

The enzyme catalyses NAD(+) + (deoxyribonucleotide)n-3'-hydroxyl + 5'-phospho-(deoxyribonucleotide)m = (deoxyribonucleotide)n+m + AMP + beta-nicotinamide D-nucleotide.. Functionally, catalyzes the formation of phosphodiester linkages between 5'-phosphoryl and 3'-hydroxyl groups in double-stranded DNA using NAD as a coenzyme and as the energy source for the reaction. This Pseudomonas syringae pv. syringae (strain B728a) protein is DNA ligase B.